The following is a 321-amino-acid chain: MMRRHLLNAGDLSRDDAIAIFDDADRFAHALVGREIKKLPTLRGRTVITMFYENSTRTRVSFEVAGKWMSANVINVSPAGSSVGKGESLRDTALTLRAAGADALIIRHPASGAAHLLADWTAAETGEDGPAVINAGDGTHEHPTQALLDALTIRQRLGSIEGRRILIVGDILHSRVARSNVVLLDTLGAEVVLVAPRTLLPIGVDGWPATVSCDFDAELPAADAVLMLRVQAERMNGGFFPSVREYSCLYGLTERRQALLPGHAVVLHPGPMLRGMEIASSVADSSQSAVLQQVSNGVHVRMAVLFHVLVGTQSAEEEGAA.

Carbamoyl phosphate is bound by residues arginine 57 and threonine 58. Residue lysine 85 coordinates L-aspartate. Carbamoyl phosphate-binding residues include arginine 107, histidine 142, and glutamine 145. 2 residues coordinate L-aspartate: arginine 175 and arginine 229. Positions 270 and 271 each coordinate carbamoyl phosphate.

Belongs to the aspartate/ornithine carbamoyltransferase superfamily. ATCase family. As to quaternary structure, heterododecamer (2C3:3R2) of six catalytic PyrB chains organized as two trimers (C3), and six regulatory PyrI chains organized as three dimers (R2).

The enzyme catalyses carbamoyl phosphate + L-aspartate = N-carbamoyl-L-aspartate + phosphate + H(+). The protein operates within pyrimidine metabolism; UMP biosynthesis via de novo pathway; (S)-dihydroorotate from bicarbonate: step 2/3. Its function is as follows. Catalyzes the condensation of carbamoyl phosphate and aspartate to form carbamoyl aspartate and inorganic phosphate, the committed step in the de novo pyrimidine nucleotide biosynthesis pathway. The sequence is that of Aspartate carbamoyltransferase catalytic subunit from Mycobacterium leprae (strain TN).